The following is a 185-amino-acid chain: Large ribosomal subunit protein uL5 (185 aa).

Belongs to the universal ribosomal protein uL5 family. Part of the 50S ribosomal subunit; part of the 5S rRNA/L5/L18/L25 subcomplex. Contacts the 5S rRNA and the P site tRNA. Forms a bridge to the 30S subunit in the 70S ribosome.

In terms of biological role, this is one of the proteins that bind and probably mediate the attachment of the 5S RNA into the large ribosomal subunit, where it forms part of the central protuberance. In the 70S ribosome it contacts protein S13 of the 30S subunit (bridge B1b), connecting the 2 subunits; this bridge is implicated in subunit movement. Contacts the P site tRNA; the 5S rRNA and some of its associated proteins might help stabilize positioning of ribosome-bound tRNAs. The polypeptide is Large ribosomal subunit protein uL5 (Rhodopseudomonas palustris (strain BisB5)).